Consider the following 654-residue polypeptide: Meiotically up-regulated gene 24 protein (654 aa).

An RRM 1 domain is found at 299-355 (RNVFIGNLPSSYHEKEIEEAFGKFGKIEHIKILSKKNIAFVHFLNIRDAIKVVRTLS). The interval 383-404 (SCFTSKQNPDTTSDRCRQQESK) is disordered. The segment covering 384–393 (CFTSKQNPDT) has biased composition (polar residues). The span at 394-404 (TSDRCRQQESK) shows a compositional bias: basic and acidic residues. RRM domains follow at residues 409–482 (RTVF…WGKE) and 500–571 (RNVY…YAPD).

It localises to the cytoplasm. Functionally, has a role in meiosis. In Schizosaccharomyces pombe (strain 972 / ATCC 24843) (Fission yeast), this protein is Meiotically up-regulated gene 24 protein (mug24).